Consider the following 377-residue polypeptide: Nitric oxide reductase FlRd-NAD(+) reductase (377 aa).

Belongs to the FAD-dependent oxidoreductase family. The cofactor is FAD.

Its subcellular location is the cytoplasm. The catalysed reaction is 2 reduced [nitric oxide reductase rubredoxin domain] + NAD(+) + H(+) = 2 oxidized [nitric oxide reductase rubredoxin domain] + NADH. It participates in nitrogen metabolism; nitric oxide reduction. Functionally, one of at least two accessory proteins for anaerobic nitric oxide (NO) reductase. Reduces the rubredoxin moiety of NO reductase. This is Nitric oxide reductase FlRd-NAD(+) reductase from Shigella sonnei (strain Ss046).